Consider the following 419-residue polypeptide: Creatine kinase S-type, mitochondrial (419 aa).

The N-terminal 39 residues, 1 to 39, are a transit peptide targeting the mitochondrion; it reads MAGTFGRLLAGRVTAALFAAAGSGVLTTGYLLNQQNVKA. A Phosphagen kinase N-terminal domain is found at 46 to 132; the sequence is KLFPPSADYP…FDPVIKARHN (87 aa). Positions 159 to 401 constitute a Phosphagen kinase C-terminal domain; sequence YVLSSRVRTG…NYLVDCEKKL (243 aa). Residues 162–166, His225, Arg270, Arg326, 354–359, and Asp369 contribute to the ATP site; these read SSRVR and RGTGGV.

This sequence belongs to the ATP:guanido phosphotransferase family. In terms of assembly, exists as an octamer composed of four MTCK homodimers. Expressed in the leg muscle and heart.

The protein localises to the mitochondrion inner membrane. The catalysed reaction is creatine + ATP = N-phosphocreatine + ADP + H(+). Its function is as follows. Reversibly catalyzes the transfer of phosphate between ATP and various phosphogens (e.g. creatine phosphate). Creatine kinase isoenzymes play a central role in energy transduction in tissues with large, fluctuating energy demands, such as skeletal muscle, heart, brain and spermatozoa. The chain is Creatine kinase S-type, mitochondrial (CKMT2) from Gallus gallus (Chicken).